The sequence spans 61 residues: MADAQDDMSQMQDKFTYDYETIRKGGLIFAAIAFVVGMLIIFSGRFRCGRKKQLRALNDDM.

Residues 24–44 (KGGLIFAAIAFVVGMLIIFSG) form a helical membrane-spanning segment.

The protein belongs to the FXYD family. Regulatory subunit of the sodium/potassium-transporting ATPase which is composed of a catalytic alpha subunit, an auxiliary non-catalytic beta subunit and an additional regulatory subunit.

The protein localises to the membrane. Functionally, may be involved in forming the receptor site for cardiac glycoside binding or may modulate the transport function of the sodium ATPase. The protein is Sodium/potassium-transporting ATPase subunit gamma (fxyd2) of Xenopus laevis (African clawed frog).